The following is a 192-amino-acid chain: Fe/S biogenesis protein NfuA (192 aa).

[4Fe-4S] cluster contacts are provided by cysteine 150 and cysteine 153.

The protein belongs to the NfuA family. Homodimer. Requires [4Fe-4S] cluster as cofactor.

Involved in iron-sulfur cluster biogenesis. Binds a 4Fe-4S cluster, can transfer this cluster to apoproteins, and thereby intervenes in the maturation of Fe/S proteins. Could also act as a scaffold/chaperone for damaged Fe/S proteins. This is Fe/S biogenesis protein NfuA from Buchnera aphidicola subsp. Acyrthosiphon pisum (strain APS) (Acyrthosiphon pisum symbiotic bacterium).